The chain runs to 634 residues: Phosphatase and actin regulator 2 (634 aa).

4 disordered regions span residues 1-32 (MDNA…KRKG), 84-344 (LPDQ…PLED), 412-471 (PQLL…ALAS), and 485-508 (NRPS…ERQE). Asp-2 carries N-myristoyl glycine lipidation. Polar residues predominate over residues 13 to 26 (IANSDGPTAGSQTP). The residue at position 16 (Ser-16) is a Phosphoserine. Thr-25 carries the post-translational modification Phosphothreonine. One copy of the RPEL 1 repeat lies at 60 to 85 (AVLERKISTRQSREELIRRGVLKELP). 2 stretches are compositionally biased toward basic and acidic residues: residues 108–120 (ESTR…KSEE) and 137–147 (EDKKENTENHS). Pro residues predominate over residues 153-162 (PALPPSAPPK). 2 stretches are compositionally biased toward low complexity: residues 231-247 (GSKA…SSRP) and 276-290 (TSHL…GTSD). Basic and acidic residues predominate over residues 291 to 304 (LKGEPAETRVESFK). The segment covering 324–341 (VPPPPVAPAPSPLAPPLP) has biased composition (pro residues). Ser-423 carries the post-translational modification Phosphoserine. Acidic residues predominate over residues 452-464 (TDDEDEDEDEDGS). 3 RPEL repeats span residues 477 to 502 (DTLA…QRTS), 515 to 540 (TKLV…KQKN), and 553 to 578 (RRLS…RFNE). Residues 488 to 508 (SKKELEDKNILQRTSEEERQE) show a composition bias toward basic and acidic residues. Ser-522 and Ser-560 each carry phosphoserine.

It belongs to the phosphatase and actin regulator family. As to quaternary structure, binds PPP1CA and actin.

It localises to the membrane. This is Phosphatase and actin regulator 2 (PHACTR2) from Homo sapiens (Human).